A 301-amino-acid chain; its full sequence is Light-independent protochlorophyllide reductase iron-sulfur ATP-binding protein (301 aa).

Residues 1-13 (MNVTLRPPLAAAP) show a composition bias toward low complexity. Residues 1–22 (MNVTLRPPLAAAPRRPDGAGSV) are disordered. Residues 45–50 (GIGKST) and Lys74 each bind ATP. A Mg(2+)-binding site is contributed by Ser49. Cys130 and Cys164 together coordinate [4Fe-4S] cluster. Residues 215-216 (NR) and 239-241 (PDL) each bind ATP.

Belongs to the NifH/BchL/ChlL family. As to quaternary structure, homodimer. Protochlorophyllide reductase is composed of three subunits; BchL, BchN and BchB. The cofactor is [4Fe-4S] cluster.

It catalyses the reaction chlorophyllide a + oxidized 2[4Fe-4S]-[ferredoxin] + 2 ADP + 2 phosphate = protochlorophyllide a + reduced 2[4Fe-4S]-[ferredoxin] + 2 ATP + 2 H2O. It functions in the pathway porphyrin-containing compound metabolism; bacteriochlorophyll biosynthesis (light-independent). In terms of biological role, component of the dark-operative protochlorophyllide reductase (DPOR) that uses Mg-ATP and reduced ferredoxin to reduce ring D of protochlorophyllide (Pchlide) to form chlorophyllide a (Chlide). This reaction is light-independent. The L component serves as a unique electron donor to the NB-component of the complex, and binds Mg-ATP. This is Light-independent protochlorophyllide reductase iron-sulfur ATP-binding protein from Bradyrhizobium sp. (strain ORS 278).